The chain runs to 132 residues: Small ribosomal subunit protein uS8 (132 aa).

It belongs to the universal ribosomal protein uS8 family. As to quaternary structure, part of the 30S ribosomal subunit. Contacts proteins S5 and S12.

Its function is as follows. One of the primary rRNA binding proteins, it binds directly to 16S rRNA central domain where it helps coordinate assembly of the platform of the 30S subunit. This is Small ribosomal subunit protein uS8 from Azorhizobium caulinodans (strain ATCC 43989 / DSM 5975 / JCM 20966 / LMG 6465 / NBRC 14845 / NCIMB 13405 / ORS 571).